A 544-amino-acid polypeptide reads, in one-letter code: MGPGARLAALLAVLALGTGDPERAAARGDTFSALTSVARALAPERRLLGLLRRYLRGEEARLRDLTRFYDKVLSLHEDSTTPVANPLLAFTLIKRLQSDWRNVVHSLEASENIRALKDGYEKVEQDLPAFEDLEGAARALMRLQDVYMLNVKGLARGVFQRVTGSAITDLYSPKRLFSLTGDDCFQVGKVAYDMGDYYHAIPWLEEAVSLFRGSYGEWKTEDEASLEDALDHLAFAYFRAGNVSCALSLSREFLLYSPDNKRMARNVLKYERLLAESPNHVVAEAVIQRPNIPHLQTRDTYEGLCQTLGSQPTLYQIPSLYCSYETNSNAYLLLQPIRKEVIHLEPYIALYHDFVSDSEAQKIRELAEPWLQRSVVASGEKQLQVEYRISKSAWLKDTVDPKLVTLNHRIAALTGLDVRPPYAEYLQVVNYGIGGHYEPHFDHATSPSSPLYRMKSGNRVATFMIYLSSVEAGGATAFIYANLSVPVVRNAALFWWNLHRSGEGDSDTLHAGCPVLVGDKWVANKWIHEYGQEFRRPCSSSPED.

The signal sequence occupies residues 1–19 (MGPGARLAALLAVLALGTG). The stretch at 107 to 131 (LEASENIRALKDGYEKVEQDLPAFE) forms a coiled coil. The TPR repeat unit spans residues 227 to 260 (EDALDHLAFAYFRAGNVSCALSLSREFLLYSPDN). N242 is a glycosylation site (N-linked (GlcNAc...) asparagine). In terms of domain architecture, Fe2OG dioxygenase spans 422–529 (YAEYLQVVNY…KWVANKWIHE (108 aa)). The Fe cation site is built by H440 and D442. N-linked (GlcNAc...) asparagine glycosylation is present at N482. Fe cation is bound at residue H510. Residue K520 coordinates 2-oxoglutarate.

This sequence belongs to the P4HA family. In terms of assembly, heterotetramer of two alpha-3 chains and two beta chains (the beta chain is the multi-functional PDI). It depends on Fe(2+) as a cofactor. Requires L-ascorbate as cofactor. Post-translationally, N-glycosylation plays no role in the catalytic activity. In terms of tissue distribution, highly expressed in placenta, liver and fetal skin. Weakly expressed in fetal epiphyseal cartilage, fetal liver, fibroblast, lung and skeletal muscle. Expressed also in fibrous cap of carotid atherosclerotic lesions.

It is found in the endoplasmic reticulum lumen. It carries out the reaction L-prolyl-[collagen] + 2-oxoglutarate + O2 = trans-4-hydroxy-L-prolyl-[collagen] + succinate + CO2. In terms of biological role, catalyzes the post-translational formation of 4-hydroxyproline in -Xaa-Pro-Gly- sequences in collagens and other proteins. The protein is Prolyl 4-hydroxylase subunit alpha-3 (P4HA3) of Homo sapiens (Human).